Consider the following 361-residue polypeptide: Geranylgeranyl pyrophosphate synthase 3 (361 aa).

The disordered stretch occupies residues 44–63 (DSNGSKELAPNGAQSRVQKP). Isopentenyl diphosphate is bound by residues Lys-81, Arg-84, and His-113. 2 residues coordinate Mg(2+): Asp-120 and Asp-124. Arg-129 contributes to the dimethylallyl diphosphate binding site. Position 130 (Arg-130) interacts with isopentenyl diphosphate. Dimethylallyl diphosphate contacts are provided by Lys-207, Thr-208, and Gln-244. Asp-247 contributes to the Mg(2+) binding site. Dimethylallyl diphosphate contacts are provided by Asn-251, Lys-261, and Lys-271.

The protein belongs to the FPP/GGPP synthase family. Requires Mg(2+) as cofactor.

The catalysed reaction is isopentenyl diphosphate + dimethylallyl diphosphate = (2E)-geranyl diphosphate + diphosphate. It catalyses the reaction isopentenyl diphosphate + (2E)-geranyl diphosphate = (2E,6E)-farnesyl diphosphate + diphosphate. It carries out the reaction isopentenyl diphosphate + (2E,6E)-farnesyl diphosphate = (2E,6E,10E)-geranylgeranyl diphosphate + diphosphate. Functionally, geranylgeranyl pyrophosphate synthase; part of the gene cluster 25 that mediates the biosynthesis of an isoprenoid secondary metabolite. This Zymoseptoria tritici (strain CBS 115943 / IPO323) (Speckled leaf blotch fungus) protein is Geranylgeranyl pyrophosphate synthase 3 (GGS3).